The following is a 269-amino-acid chain: Lysyl endopeptidase (269 aa).

3 cysteine pairs are disulfide-bonded: C6-C216, C12-C80, and C36-C58. Active-site charge relay system residues include H57, D113, and S194.

Belongs to the peptidase S1 family.

The protein resides in the secreted. The enzyme catalyses Preferential cleavage: Lys-|-Xaa, including Lys-|-Pro.. In terms of biological role, highly specific endopeptidase that hydrolyzes lysyl bonds including the Lys-Pro bond. In Lysobacter enzymogenes, this protein is Lysyl endopeptidase.